The chain runs to 293 residues: Kallikrein-5 (293 aa).

Residues 1-22 (MATARPPWMWVLCALITALLLG) form the signal peptide. Over residues 37–49 (HPSNTVPSGSNQD) the composition is skewed to polar residues. The disordered stretch occupies residues 37 to 68 (HPSNTVPSGSNQDLGAGAGEDARSDDSSSRII). One can recognise a Peptidase S1 domain in the interval 67–290 (IINGSDCDMH…FTKWIQETIQ (224 aa)). Asn-69 carries N-linked (GlcNAc...) asparagine glycosylation. 6 disulfide bridges follow: Cys-73–Cys-206, Cys-93–Cys-109, Cys-178–Cys-279, Cys-185–Cys-251, Cys-217–Cys-231, and Cys-241–Cys-266. Residues His-108 and Asp-153 each act as charge relay system in the active site. Asn-173 and Asn-208 each carry an N-linked (GlcNAc...) asparagine glycan. Ser-245 functions as the Charge relay system in the catalytic mechanism. Asn-252 carries N-linked (GlcNAc...) asparagine glycosylation.

This sequence belongs to the peptidase S1 family. Kallikrein subfamily. As to quaternary structure, interacts with SPINK9. As to expression, expressed in skin, breast, brain and testis. Expressed at the stratum granulosum of palmar skin.

It localises to the secreted. Inhibited by Zn2+. Functionally, may be involved in desquamation. The sequence is that of Kallikrein-5 from Homo sapiens (Human).